The following is a 195-amino-acid chain: Small ribosomal subunit protein uS4 (195 aa).

An S4 RNA-binding domain is found at 109-183 (RRLQTQVFKL…VKRKNLKKNQ (75 aa)). The interval 165-195 (PFGGGRPGRVKRKNLKKNQGGGGGAAEEEED) is disordered.

The protein belongs to the universal ribosomal protein uS4 family. Component of the small ribosomal subunit. Identified in a IGF2BP1-dependent mRNP granule complex containing untranslated mRNAs. Part of the small subunit (SSU) processome, composed of more than 70 proteins and the RNA chaperone small nucleolar RNA (snoRNA) U3.

Its subcellular location is the cytoplasm. The protein localises to the nucleus. It is found in the nucleolus. Functionally, component of the small ribosomal subunit. The ribosome is a large ribonucleoprotein complex responsible for the synthesis of proteins in the cell. Part of the small subunit (SSU) processome, first precursor of the small eukaryotic ribosomal subunit. During the assembly of the SSU processome in the nucleolus, many ribosome biogenesis factors, an RNA chaperone and ribosomal proteins associate with the nascent pre-rRNA and work in concert to generate RNA folding, modifications, rearrangements and cleavage as well as targeted degradation of pre-ribosomal RNA by the RNA exosome. In Drosophila melanogaster (Fruit fly), this protein is Small ribosomal subunit protein uS4.